The following is a 178-amino-acid chain: Inorganic pyrophosphatase (178 aa).

Lys-30, Arg-44, and Tyr-56 together coordinate substrate. Mg(2+) contacts are provided by Asp-66, Asp-71, and Asp-103. Residue Tyr-140 coordinates substrate.

This sequence belongs to the PPase family. Homohexamer. Requires Mg(2+) as cofactor.

It localises to the cytoplasm. The enzyme catalyses diphosphate + H2O = 2 phosphate + H(+). Its function is as follows. Catalyzes the hydrolysis of inorganic pyrophosphate (PPi) forming two phosphate ions. This is Inorganic pyrophosphatase from Thermococcus kodakarensis (strain ATCC BAA-918 / JCM 12380 / KOD1) (Pyrococcus kodakaraensis (strain KOD1)).